The sequence spans 125 residues: Large ribosomal subunit protein bL12 (125 aa).

This sequence belongs to the bacterial ribosomal protein bL12 family. Homodimer. Part of the ribosomal stalk of the 50S ribosomal subunit. Forms a multimeric L10(L12)X complex, where L10 forms an elongated spine to which 2 to 4 L12 dimers bind in a sequential fashion. Binds GTP-bound translation factors.

Functionally, forms part of the ribosomal stalk which helps the ribosome interact with GTP-bound translation factors. Is thus essential for accurate translation. The protein is Large ribosomal subunit protein bL12 of Gluconobacter oxydans (strain 621H) (Gluconobacter suboxydans).